The primary structure comprises 557 residues: Urocanate hydratase (557 aa).

NAD(+) contacts are provided by residues 52-53 (GG), glutamine 130, 176-178 (GMG), glutamate 196, arginine 201, 242-243 (NA), 263-267 (QTSAH), 273-274 (YL), and tyrosine 322. Cysteine 410 is a catalytic residue. An NAD(+)-binding site is contributed by glycine 492.

The protein belongs to the urocanase family. It depends on NAD(+) as a cofactor.

Its subcellular location is the cytoplasm. It carries out the reaction 4-imidazolone-5-propanoate = trans-urocanate + H2O. It participates in amino-acid degradation; L-histidine degradation into L-glutamate; N-formimidoyl-L-glutamate from L-histidine: step 2/3. In terms of biological role, catalyzes the conversion of urocanate to 4-imidazolone-5-propionate. The chain is Urocanate hydratase from Pseudoalteromonas translucida (strain TAC 125).